Reading from the N-terminus, the 301-residue chain is uncharacterized protein (301 aa).

The N-terminal stretch at 1-28 is a signal peptide; it reads MFFREDKSVAFRLRSAALSGCATGQSDA.

This is an uncharacterized protein from Treponema pallidum (strain Nichols).